The primary structure comprises 246 residues: Myogenic factor 5 (246 aa).

A disordered region spans residues 1–38 (RVRARIPGLSSPEGEFPEDFEPRELPPFGAPAPTEPAC). The bHLH domain occupies 73 to 124 (DRRKAATMRERRRLKKVNQAFETLKRCTTANPNQRLPKVEILRNAIRYIESL). Positions 210-246 (EEPGLPLRHAGSLSPGASIDSGARTPGSPPPRTYQAL) are disordered. A compositionally biased stretch (pro residues) spans 236 to 246 (GSPPPRTYQAL).

In terms of assembly, efficient DNA binding requires dimerization with another bHLH protein.

It is found in the nucleus. In terms of biological role, acts as a transcriptional activator that promotes transcription of muscle-specific target genes and plays a role in muscle differentiation. Induces fibroblasts to differentiate into myoblasts. Probable sequence specific DNA-binding protein. The chain is Myogenic factor 5 (MYF5) from Coturnix japonica (Japanese quail).